Reading from the N-terminus, the 801-residue chain is Na(+)/H(+) antiporter subunit A1 (801 aa).

19 consecutive transmembrane segments (helical) span residues 1-21 (MSLL…IPIL), 28-48 (IHLG…MLTL), 79-99 (LGLL…LYSI), 117-137 (LFMG…LYLF), 166-186 (LIIT…LAIP), 206-226 (PFFI…SAQF), 265-285 (IFAA…ITLF), 300-320 (ILAF…GIGA), 337-357 (FTAA…LFMI), 373-393 (LGGL…TALS), 427-447 (LGYL…VYSI), 472-492 (ILML…GLFP), 522-542 (GLTP…LLIV), 591-611 (LVII…SVPF), 623-643 (IFEV…LFAK), 646-666 (LFNI…FIFF), 671-691 (LALT…LCFY), 707-727 (LTNA…GLIA), and 764-784 (MDTL…YTMI).

This sequence belongs to the CPA3 antiporters (TC 2.A.63) subunit A family. May form a heterooligomeric complex that consists of seven subunits: mnhA1, mnhB1, mnhC1, mnhD1, mnhE1, mnhF1 and mnhG1.

Its subcellular location is the cell membrane. Its function is as follows. Mnh complex is a Na(+)/H(+) antiporter involved in Na(+) excretion. This is Na(+)/H(+) antiporter subunit A1 (mnhA1) from Staphylococcus aureus (strain bovine RF122 / ET3-1).